The sequence spans 152 residues: Small heat shock protein HspA (152 aa).

One can recognise a sHSP domain in the interval 29–139 (TAGEANYPPC…KPRRIPIDNL (111 aa)).

The protein belongs to the small heat shock protein (HSP20) family.

In Bradyrhizobium diazoefficiens (strain JCM 10833 / BCRC 13528 / IAM 13628 / NBRC 14792 / USDA 110), this protein is Small heat shock protein HspA (hspA).